The chain runs to 1818 residues: Unconventional myosin-Vb (1818 aa).

The region spanning 8–60 (TRYTRVWIPDPDEVWRSAELTKDYKEGDKSLQLRLEDDTILEYPVDVQNNQVP) is the Myosin N-terminal SH3-like domain. Positions 21-40 (VWRSAELTKDYKEGDKSLQL) are requires for interaction with LIMA1. Residues 69–762 (VGENDLTALS…QVAYLEKLRA (694 aa)) enclose the Myosin motor domain. 163–170 (GESGAGKT) provides a ligand contact to ATP. Residues 641-663 (LNLLMETLNATTPHYVRCIKPND) form an actin-binding region. IQ domains lie at 765-794 (FREA…ATLS), 788-817 (LRAA…TRAA), 813-842 (RTRA…ATVI), 836-865 (VCRA…EHKA), 861-890 (MEHK…AAIV), and 884-913 (ERDA…EARS). 2 disordered regions span residues 1086–1120 (LRDE…EIGD) and 1161–1188 (QAQL…VDQD). The segment covering 1098 to 1118 (PSNQSSLESDSNYPSISTSEI) has biased composition (polar residues). Coiled coils occupy residues 1140 to 1261 (MTVF…LILR) and 1313 to 1415 (LEAQ…ALAQ). S1416 bears the Phosphoserine mark. In terms of domain architecture, Dilute spans 1496 to 1773 (SSTINGIKKV…IRTIQAQLQE (278 aa)).

The protein belongs to the TRAFAC class myosin-kinesin ATPase superfamily. Myosin family. As to quaternary structure, component of the CART complex, at least composed of ACTN4, HGS/HRS, MYO5B and TRIM3. Interacts with RAB11FIP2. Interacts with RAB11A and RAB8A. Found in a complex with CFTR and RAB11A. Interacts with NPC1L1. Interacts with LIMA1.

It is found in the cytoplasm. Functionally, may be involved in vesicular trafficking via its association with the CART complex. The CART complex is necessary for efficient transferrin receptor recycling but not for EGFR degradation. Required in a complex with RAB11A and RAB11FIP2 for the transport of NPC1L1 to the plasma membrane. Together with RAB11A participates in CFTR trafficking to the plasma membrane and TF (transferrin) recycling in nonpolarized cells. Together with RAB11A and RAB8A participates in epithelial cell polarization. Together with RAB25 regulates transcytosis. Required for proper localization of bile salt export pump ABCB11 at the apical/canalicular plasma membrane of hepatocytes. The polypeptide is Unconventional myosin-Vb (Myo5b) (Mus musculus (Mouse)).